Consider the following 545-residue polypeptide: Cytochrome P450 monooxygenase sdnB (545 aa).

N-linked (GlcNAc...) asparagine glycosylation is present at Asn-5. A helical transmembrane segment spans residues Ser-30–Tyr-50. The N-linked (GlcNAc...) asparagine glycan is linked to Asn-276. Residues Leu-322–Ser-342 traverse the membrane as a helical segment. Asn-393 and Asn-476 each carry an N-linked (GlcNAc...) asparagine glycan. Cys-486 lines the heme pocket.

The protein belongs to the cytochrome P450 family. Heme is required as a cofactor.

It localises to the membrane. Its pathway is antibiotic biosynthesis. Its function is as follows. Cytochrome P450 monooxygenase; part of the gene cluster that mediates the biosynthesis of sordarin and hypoxysordarin, glycoside antibiotics with a unique tetracyclic diterpene aglycone structure. First, the geranylgeranyl diphosphate synthase sdnC constructs GGDP from farnesyl diphosphate and isopentenyl diphosphate. The diterpene cyclase sdnA then catalyzes the cyclization of GGDP to afford cycloaraneosene. Cycloaraneosene is then hydroxylated four times by the putative cytochrome P450 monooxygenases sdnB, sdnE, sdnF and sdnH to give a hydroxylated cycloaraneosene derivative such as cycloaraneosene-8,9,13,19-tetraol. Although the order of the hydroxylations is unclear, at least C8, C9 and C13 of the cycloaraneosene skeleton are hydroxylated before the sordaricin formation. Dehydration of the 13-hydroxy group of the hydroxylated cycloaraneosene derivative might be catalyzed by an unassigned hypothetical protein such as sdnG and sdnP to construct the cyclopentadiene moiety. The FAD-dependent oxidoreductase sdnN is proposed to catalyze the oxidation at C9 of the hydroxylated cycloaraneosene derivative and also catalyze the Baeyer-Villiger oxidation to give the lactone intermediate. The presumed lactone intermediate would be hydrolyzed to give an acrolein moiety and a carboxylate moiety. Then, [4+2]cycloaddition would occur between the acrolein moiety and the cyclopentadiene moiety to give sordaricin. SdnN might also be involved in the [4+2]cycloaddition after the hypothesized oxidation to accommodate the oxidized product and prompt the [4+2]cycloaddition. GDP-6-deoxy-D-altrose may be biosynthesized from GDP-D-mannose by the putative GDP-mannose-4,6-dehydratase sdnI and the short-chain dehydrogenase sdnK. The glycosyltransferase sdnJ catalyzes the attachment of 6-deoxy-D-altrose onto the 19-hydroxy group of sordaricin to give 4'-O-demethylsordarin. The methyltransferase sdnD would complete the biosynthesis of sordarin. Sordarin can be further modified into hypoxysordarin. The unique acyl chain at the 3'-hydroxy group of hypoxysordarin would be constructed by an iterative type I PKS sdnO and the trans-acting polyketide methyltransferase sdnL. SdnL would be responsible for the introduction of an alpha-methyl group of the polyketide chain. Alternatively, the beta-lactamase-like protein sdnR might be responsible for the cleavage and transfer of the polyketide chain from the PKS sdnO to sordarin. Two putative cytochrome P450 monooxygenases, sdnQ and sdnT, might catalyze the epoxidations of the polyketide chain to complete the biosynthesis of hypoxysordarin. Transcriptional regulators sdnM and sdnS are presumably encoded for the transcriptional regulation of the expression of the sdn gene cluster. The protein is Cytochrome P450 monooxygenase sdnB of Sordaria araneosa (Pleurage araneosa).